A 534-amino-acid polypeptide reads, in one-letter code: MAFSTYLGSLESSLVLKGLAGVWLVWYIGRVFYNIFLHPLANVPGPLLCKFSKIPWDYWQWTGRLPQNTAKVHAKYGEIVRIGPNELSFTNNAAWNDIFAKVPGRAQWPRHPKRVPQGKNGPQSIMNTAGTYHARFRRLLNHAFSEKGLQEQQDLITKYIDIFVSKVDGFARTGQSLDVTKWFVMVGFDVISDLGWSEPFNCVENGEVHEWMKTFAETAFDTQLKFLFRERGLMFLAPYLVPMKLQLARLNNFKYARARVEERIKTGGTRGDFWDKISVKSAGDNASGEGLTKEEMVVAAVTLVGTGSHTISTLLTGLAYFLGTNPHTMKKLVDEIRTSFNSPEEIDLVSVHKLKYLTACLNETMRLYPPVINMLWRTPPQGGGHASGIFIPEGTGCNMSFFGIAQNPDYFTRPLDFCPERFLPDPPAEFRDDNHEAYHPFSLGAYNCLGQNLANAESRLIMTKLLWYFDFELDGTVDKDWLDQKSYGVFIKKELPVKFHPGPNAVRHVANGNGVATNGHANGHANGHARINTK.

Cysteine 448 provides a ligand contact to heme.

Belongs to the cytochrome P450 family. The cofactor is heme.

It functions in the pathway secondary metabolite biosynthesis; terpenoid biosynthesis. Cytochrome P450 monooxygenase; part of the gene cluster that mediates the biosynthesis of viridicatumtoxin, a tetracycline-like fungal meroterpenoid with a unique, fused spirobicyclic ring system. The first step of the pathway is the production of the malonamoyl-CoA starter unit for the polyketide synthase vrtA. The aldolase vrtJ may be involved in the synthesis of the malonamate substrate for malonamoyl-CoA synthetase vrtB. The polyketide synthase vrtA then may utilize the malonamoyl-CoA starter unit, followed by sequential condensation of eight malonyl-CoA units to form the polyketide backbone. The cyclization of the last ring could be mediated by the lactamase-like protein vrtG. The proposed post-PKS tailoring steps are a hydroxylation at C5 catalyzed the cytochrome P450 monooxygenase vrtE, a hydroxylation at C12a catalyzed by VrtH and/or VrtI, and an O-methylation by the O-methyltransferase vrtF. VrtC is then proposed to catalyze the transfer of a geranyl group synthesized by vrtD to the aromatic C ring of the tetracyclic polyketide intermediate of viridicatumtoxin to yield previridicatumtoxin. Finally, the cytochrome P450 monooxygenase vrtK catalyzes the spirocyclization of the geranyl moiety of previridicatumtoxin to afford viridicatumtoxin. This Penicillium aethiopicum protein is Cytochrome P450 monooxygenase vrtK.